The primary structure comprises 248 residues: Probable transcriptional regulatory protein RHECIAT_CH0003714 (248 aa).

The protein belongs to the TACO1 family.

The protein localises to the cytoplasm. This is Probable transcriptional regulatory protein RHECIAT_CH0003714 from Rhizobium etli (strain CIAT 652).